We begin with the raw amino-acid sequence, 226 residues long: UPF0758 protein Daci_1904 (226 aa).

The region spanning 104 to 226 (ALASPEAVAR…SLSMAGQGML (123 aa)) is the MPN domain. Zn(2+) is bound by residues H175, H177, and D188. Positions 175-188 (HNHPSGQVQASAAD) match the JAMM motif motif.

The protein belongs to the UPF0758 family.

This chain is UPF0758 protein Daci_1904, found in Delftia acidovorans (strain DSM 14801 / SPH-1).